Consider the following 71-residue polypeptide: Small ribosomal subunit protein bS21 (71 aa).

The tract at residues 39-71 (EKPTQERKRKAAAAVKRQLRRSSRDVTKRQRLY) is disordered. The segment covering 45 to 59 (RKRKAAAAVKRQLRR) has biased composition (basic residues). Residues 60 to 71 (SSRDVTKRQRLY) are compositionally biased toward basic and acidic residues.

This sequence belongs to the bacterial ribosomal protein bS21 family.

This Stenotrophomonas maltophilia (strain K279a) protein is Small ribosomal subunit protein bS21.